A 255-amino-acid chain; its full sequence is Complement C1q-like protein 3 (255 aa).

The first 20 residues, 1-20 (MVLLLVILIPVLVSSAGTSA), serve as a signal peptide directing secretion. The interval 39-109 (KAPSTAATPD…GLPGPPGAPG (71 aa)) is disordered. Positions 61–111 (GPKGEAGRPGKAGPRGPPGEPGPPGPVGPPGEKGEPGRQGLPGPPGAPGLN) constitute a Collagen-like domain. Pro residues predominate over residues 75–89 (RGPPGEPGPPGPVGP). The C1q domain maps to 122 to 255 (STVPKIAFYA…TFSGFIIYAD (134 aa)).

Forms homooligomers. Interacts with ADGRB3. Forms heterooligomers with C1QL2 and C1QL4, when proteins are coexpressed; this interaction does not occur after secretion. Highly expressed in brain and white adipose tissue. In gonadal fat pad, expressed at lower levels in adipocytes than in the stromal vascular fraction (VSP), which contains preadipocytes, fibroblasts, endothelial cells and occasional immune cells. Expression exhibits sexually dimorphism, with higher levels in females than in males (at protein level). Tends to be up-regulated in adipose tissue from obese males, but not females. Expressed in glial cells.

Its subcellular location is the secreted. May regulate the number of excitatory synapses that are formed on hippocampus neurons. Has no effect on inhibitory synapses. Plays a role in glucose homeostasis. Via AMPK signaling pathway, stimulates glucose uptake in adipocytes, myotubes and hepatocytes and enhances insulin-stimulated glucose uptake. In a hepatoma cell line, reduces the expression of gluconeogenic enzymes G6PC1 and PCK1 and hence decreases de novo glucose production. The polypeptide is Complement C1q-like protein 3 (C1ql3) (Mus musculus (Mouse)).